Reading from the N-terminus, the 205-residue chain is Molybdenum cofactor guanylyltransferase (205 aa).

Residues 14-16 (LAG), Lys27, Asp77, and Asp107 each bind GTP. Asp107 contributes to the Mg(2+) binding site.

The protein belongs to the MobA family. Monomer. Mg(2+) serves as cofactor.

It localises to the cytoplasm. It carries out the reaction Mo-molybdopterin + GTP + H(+) = Mo-molybdopterin guanine dinucleotide + diphosphate. Transfers a GMP moiety from GTP to Mo-molybdopterin (Mo-MPT) cofactor (Moco or molybdenum cofactor) to form Mo-molybdopterin guanine dinucleotide (Mo-MGD) cofactor. This Burkholderia ambifaria (strain MC40-6) protein is Molybdenum cofactor guanylyltransferase.